Consider the following 88-residue polypeptide: Small ribosomal subunit protein uS15 (88 aa).

This sequence belongs to the universal ribosomal protein uS15 family. In terms of assembly, part of the 30S ribosomal subunit. Forms a bridge to the 50S subunit in the 70S ribosome, contacting the 23S rRNA.

One of the primary rRNA binding proteins, it binds directly to 16S rRNA where it helps nucleate assembly of the platform of the 30S subunit by binding and bridging several RNA helices of the 16S rRNA. In terms of biological role, forms an intersubunit bridge (bridge B4) with the 23S rRNA of the 50S subunit in the ribosome. The chain is Small ribosomal subunit protein uS15 from Geotalea uraniireducens (strain Rf4) (Geobacter uraniireducens).